The primary structure comprises 487 residues: L-carnitine dehydrogenase/betainyl-CoA thioesterase (487 aa).

An L-carnitine dehydrogenase region spans residues 1–327 (MTTAAIIGGG…DAALKPKALP (327 aa)). An NAD(+)-binding site is contributed by 8 to 13 (GGGVIG). The tract at residues 328-487 (DLDTADLTQP…GAGSAIRKPA (160 aa)) is betainyl-CoA thioesterase.

This sequence in the N-terminal section; belongs to the 3-hydroxyacyl-CoA dehydrogenase family. L-carnitine dehydrogenase subfamily. In the C-terminal section; belongs to the betainyl-CoA thioesterase family. Homodimer.

The protein localises to the cytoplasm. It catalyses the reaction carnitine + NAD(+) = 3-dehydrocarnitine + NADH + H(+). It carries out the reaction N,N,N-trimethylglycyl-CoA + H2O = glycine betaine + CoA + H(+). It participates in amine and polyamine metabolism; carnitine metabolism. In terms of biological role, multifunctional enzyme that catalyzes the NAD(+)-dependent oxidation of L-carnitine to 3-dehydrocarnitine and the cleavage of betainyl-CoA (N,N,N-trimethylglycyl-CoA) into glycine betaine and coenzyme A. The chain is L-carnitine dehydrogenase/betainyl-CoA thioesterase from Ruegeria pomeroyi (strain ATCC 700808 / DSM 15171 / DSS-3) (Silicibacter pomeroyi).